The following is a 354-amino-acid chain: MSQSTYSLEQLADFLKVEFQGNGATLLSGVEEIEEAKTAHITFLDNEKYAKHLKSSEAGAIIISRTQFQKYRDLNKNFLITSESPSLVFQKCLELFITPVDSGFPGIHPTAVIHPTAIIEDHVCIEPYAVVCQHAHVGSACHIGSGSVIGAYSTVGQHSYIHPRVVIRERVSIGKRVIIQPGAVIGSCGFGYVTSAFGQHKHLKHLGKVIIEDDVEIGANTTIDRGRFKHSVVREGSKIDNLVQIAHQVEVGQHSMIVAQAGIAGSTKIGNHVIIGGQAGITGHICIADHVIMMAQTGVTKSITSPGIYGGAPARPYQEIHRQVAKVRNLPRLEERIAALEKLVQKLEALSEQH.

Residue H247 is the Proton acceptor of the active site.

This sequence belongs to the transferase hexapeptide repeat family. LpxD subfamily. In terms of assembly, homotrimer.

The catalysed reaction is a UDP-3-O-[(3R)-3-hydroxyacyl]-alpha-D-glucosamine + a (3R)-hydroxyacyl-[ACP] = a UDP-2-N,3-O-bis[(3R)-3-hydroxyacyl]-alpha-D-glucosamine + holo-[ACP] + H(+). Its pathway is bacterial outer membrane biogenesis; LPS lipid A biosynthesis. Functionally, catalyzes the N-acylation of UDP-3-O-acylglucosamine using 3-hydroxyacyl-ACP as the acyl donor. Is involved in the biosynthesis of lipid A, a phosphorylated glycolipid that anchors the lipopolysaccharide to the outer membrane of the cell. This chain is UDP-3-O-acylglucosamine N-acyltransferase, found in Chlamydia trachomatis serovar L2 (strain ATCC VR-902B / DSM 19102 / 434/Bu).